The following is a 360-amino-acid chain: DNA replication and repair protein RecF (360 aa).

Gly-33–Thr-40 is an ATP binding site.

Belongs to the RecF family.

It localises to the cytoplasm. Its function is as follows. The RecF protein is involved in DNA metabolism; it is required for DNA replication and normal SOS inducibility. RecF binds preferentially to single-stranded, linear DNA. It also seems to bind ATP. The chain is DNA replication and repair protein RecF from Rickettsia canadensis (strain McKiel).